The primary structure comprises 882 residues: DNA mismatch repair protein MutS (882 aa).

Residue 635-642 (GPNMGGKS) coordinates ATP.

It belongs to the DNA mismatch repair MutS family.

This protein is involved in the repair of mismatches in DNA. It is possible that it carries out the mismatch recognition step. This protein has a weak ATPase activity. The chain is DNA mismatch repair protein MutS from Janthinobacterium sp. (strain Marseille) (Minibacterium massiliensis).